Reading from the N-terminus, the 842-residue chain is Leucine--tRNA ligase (842 aa).

Positions 62-72 (PYPSGDLHMGH) match the 'HIGH' region motif. The segment at 390–414 (GDEDPAETGVATAGEGTLKNSGELD) is disordered. The short motif at 607-611 (AMSKS) is the 'KMSKS' region element. Position 610 (Lys-610) interacts with ATP.

The protein belongs to the class-I aminoacyl-tRNA synthetase family.

The protein localises to the cytoplasm. The catalysed reaction is tRNA(Leu) + L-leucine + ATP = L-leucyl-tRNA(Leu) + AMP + diphosphate. In Paenarthrobacter aurescens (strain TC1), this protein is Leucine--tRNA ligase.